The chain runs to 155 residues: Large ribosomal subunit protein uL22 (155 aa).

Belongs to the universal ribosomal protein uL22 family. As to quaternary structure, part of the 50S ribosomal subunit. Contacts the macrolide antibiotic tylosin in the polypeptide exit tunnel.

In terms of biological role, this protein binds specifically to 23S rRNA. It makes multiple contacts with different domains of the 23S rRNA in the assembled 50S subunit and ribosome. Functionally, contacts all 6 domains of the 23S rRNA, helping stabilize their relative orientation. An extended beta-hairpin in the C-terminus forms part of the polypeptide exit tunnel, in which it helps forms a bend with protein L4, while most of the rest of the protein is located at the polypeptide exit tunnel on the outside of the subunit. This chain is Large ribosomal subunit protein uL22, found in Haloarcula marismortui (strain ATCC 43049 / DSM 3752 / JCM 8966 / VKM B-1809) (Halobacterium marismortui).